A 22-amino-acid chain; its full sequence is Hemoglobinase-like protein 2 (22 aa).

It belongs to the peptidase C13 family.

The catalysed reaction is Hydrolysis of proteins and small molecule substrates at -Asn-|-Xaa- bonds.. This Fasciola hepatica (Liver fluke) protein is Hemoglobinase-like protein 2.